A 37-amino-acid polypeptide reads, in one-letter code: Rugosin-C (37 aa).

Cys-31 and Cys-37 are joined by a disulfide.

It belongs to the frog skin active peptide (FSAP) family. Brevinin subfamily. In terms of tissue distribution, expressed by the skin glands.

It localises to the secreted. Functionally, has antibacterial activity against Gram-positive bacteria. This is Rugosin-C from Glandirana rugosa (Japanese wrinkled frog).